An 801-amino-acid chain; its full sequence is Phosphatidylinositol 3-kinase pik3 (801 aa).

The C2 PI3K-type domain occupies Val-14–Gln-166. Residues Asp-257–Glu-439 form the PIK helical domain. Residues Ile-515–Phe-785 form the PI3K/PI4K catalytic domain. The segment at Val-521–Gln-527 is G-loop. Positions Gly-654 to Asn-662 are catalytic loop. The segment at His-673–Ser-694 is activation loop.

The protein belongs to the PI3/PI4-kinase family. Component of the autophagy-specific vps34 PI3-kinase complex I composed of vps15, atg6, pik3/vps34, atg14 and atg38. Also a component of the VPS34 PI3-kinase complex II composed of atg6, pik3, vps15 and vps38.

It carries out the reaction a 1,2-diacyl-sn-glycero-3-phospho-(1D-myo-inositol) + ATP = a 1,2-diacyl-sn-glycero-3-phospho-(1D-myo-inositol-3-phosphate) + ADP + H(+). In terms of biological role, phosphatidylinositol 3-kinase that functions as a part of the autophagy-specific VPS34 PI3-kinase complex I that plays a role in autophagosome assembly. This complex is essential to recruit the atg8-phosphatidylinositol conjugate and the atg12-atg5 conjugate to the pre-autophagosomal structure. Also functions as part of the VPS34 PI3-kinase complex II. The polypeptide is Phosphatidylinositol 3-kinase pik3 (pik3) (Schizosaccharomyces pombe (strain 972 / ATCC 24843) (Fission yeast)).